A 396-amino-acid polypeptide reads, in one-letter code: S-adenosylmethionine synthase (396 aa).

His16 serves as a coordination point for ATP. A Mg(2+)-binding site is contributed by Asp18. Glu44 serves as a coordination point for K(+). L-methionine is bound by residues Glu57 and Gln100. Residues 100–110 (QSQDIARGVDN) are flexible loop. ATP-binding positions include 162–164 (DGK), Asp237, 243–244 (RK), Ala260, and Lys264. Asp237 is a binding site for L-methionine. Residue Lys268 coordinates L-methionine.

The protein belongs to the AdoMet synthase family. Homotetramer; dimer of dimers. The cofactor is Mg(2+). Requires K(+) as cofactor.

The protein resides in the cytoplasm. It catalyses the reaction L-methionine + ATP + H2O = S-adenosyl-L-methionine + phosphate + diphosphate. The protein operates within amino-acid biosynthesis; S-adenosyl-L-methionine biosynthesis; S-adenosyl-L-methionine from L-methionine: step 1/1. Its function is as follows. Catalyzes the formation of S-adenosylmethionine (AdoMet) from methionine and ATP. The overall synthetic reaction is composed of two sequential steps, AdoMet formation and the subsequent tripolyphosphate hydrolysis which occurs prior to release of AdoMet from the enzyme. This chain is S-adenosylmethionine synthase, found in Myxococcus xanthus.